Consider the following 333-residue polypeptide: MARKKIALIGGGQIGGTLALLAGLKELGDVVIFDIAEGLPQGKALDLAQTGPVEGYNTALSGANDYKGIKGADVVIVTAGVPRKPGMSRDDLLGINLKVMKQVGEGIAKYAPNAFVVCITNPLDAMVWALRQFSGLPHNKVVGMAGVLDSGRFRLFLAEEFGVSVEDVTAFVLGGHGDTMVPLPRYSTVAGIPLPDLVKMGWTTKEKLDKIIQRTRDGGAEIVGLLKTGSAFYAPAASGIQMAEAYLKDQKRVLPCAAYINGQYGVKDMYVGVPVVIGAGGVERIVEIDLNGSEKKQFMNSVNAVKGLVDACKKIDPAVAKGAAPAKKAAKKK.

Residues 10 to 15 (GGGQIG) and Asp-34 contribute to the NAD(+) site. Residues Arg-83 and Arg-89 each contribute to the substrate site. NAD(+)-binding positions include Asn-96 and 119-121 (ITN). Asn-121 and Arg-152 together coordinate substrate. His-176 acts as the Proton acceptor in catalysis.

Belongs to the LDH/MDH superfamily. MDH type 3 family.

It catalyses the reaction (S)-malate + NAD(+) = oxaloacetate + NADH + H(+). In terms of biological role, catalyzes the reversible oxidation of malate to oxaloacetate. The protein is Malate dehydrogenase of Parvibaculum lavamentivorans (strain DS-1 / DSM 13023 / NCIMB 13966).